We begin with the raw amino-acid sequence, 622 residues long: Sodium-coupled monocarboxylate transporter 1 (622 aa).

At 1 to 15 (MVTPGNIGSFTVWDY) the chain is on the extracellular side. A helical membrane pass occupies residues 16–36 (LVFALMLLISAVIGIYYAFAG). At 37-51 (GGQKTSKDFLMGGRS) the chain is on the cytoplasmic side. The helical transmembrane segment at 52–72 (MTAVPVALSLTASFMSAVTVL) threads the bilayer. The Extracellular segment spans residues 73 to 83 (GTPAEVYRFGA). Residues 84 to 104 (MFIIFAFSYTIVVIISSEVFL) traverse the membrane as a helical segment. Over 105–128 (PVFYRLGITSTYEYLELRFNKFVR) the chain is Cytoplasmic. The helical transmembrane segment at 129 to 149 (LLGTILFIIQTVLYTGIVIYA) threads the bilayer. Topologically, residues 150-161 (PALALNQVTGFD) are extracellular. A helical transmembrane segment spans residues 162–182 (LWGAVVATGVVCTFYCTMGGL). Residues 183–184 (KA) lie on the Cytoplasmic side of the membrane. A helical membrane pass occupies residues 185–205 (VVWTDVFQVGIMVAGFTSVII). Topologically, residues 206–241 (RAVVVQGGIGPILNDSYYGDRLNFWDFDPNPLKRHT) are extracellular. Residue Asn-219 is glycosylated (N-linked (GlcNAc...) asparagine). The chain crosses the membrane as a helical span at residues 242–262 (FWTIVVGGTFTWTGIYGVNQA). At 263-283 (QVQRYIACKTRFQAKMSLYVN) the chain is on the cytoplasmic side. A helical membrane pass occupies residues 284 to 304 (LIGLWAILACAVLSGLAMYSI). Residues 305–336 (YKDCDPWTAKFVSAPDQLMPYLALDILRDYPG) lie on the Extracellular side of the membrane. The helical transmembrane segment at 337–357 (LPGLFVSCAYSGTLSTVSSSI) threads the bilayer. The Cytoplasmic portion of the chain corresponds to 358–389 (NALAAVTVEDLIKPYIRSLSEKKMSWISKGTS). The helical transmembrane segment at 390–410 (LLYGAICIGMAGIASLMGGLL) threads the bilayer. The Extracellular portion of the chain corresponds to 411–415 (QAALS). A helical transmembrane segment spans residues 416 to 436 (IFGMVGGPLLGLFSLGILFPF). Topologically, residues 437-438 (VN) are cytoplasmic. A helical membrane pass occupies residues 439-459 (SLGAVIGLLSGFAISLWVGIG). Residues 460 to 521 (SQIYAPSPSS…LADSWYSLSY (62 aa)) lie on the Extracellular side of the membrane. Residues Asn-481 and Asn-488 are each glycosylated (N-linked (GlcNAc...) asparagine). Residues 522 to 542 (LYFSTIGTIVAVLVGVIVSLL) form a helical membrane-spanning segment. At 543–622 (SGGLKQNVNR…KGEKTNGITA (80 aa)) the chain is on the cytoplasmic side. The segment at 591–622 (DNDMEQGTDNPAFNNMEMTSTEKGEKTNGITA) is disordered. Residues 595 to 609 (EQGTDNPAFNNMEMT) are compositionally biased toward polar residues.

Belongs to the sodium:solute symporter (SSF) (TC 2.A.21) family. In terms of tissue distribution, in the gastrula and neurula stages, expressed in the gastrula anterior endoderm and in the entire circumference of the blastopore lip superficial endoderm. At tailbud stages, abundant expression observed in the ventral midgut region. As development proceeds expression becomes restricted to the liver diverticulum and ultimately to the presumptive gallbladder, by tadpole stage 35. Also present in pronephros and the tip of the tail.

It is found in the apical cell membrane. The catalysed reaction is (S)-lactate(out) + 2 Na(+)(out) = (S)-lactate(in) + 2 Na(+)(in). The enzyme catalyses propanoate(out) + 2 Na(+)(out) = propanoate(in) + 2 Na(+)(in). It catalyses the reaction pyruvate(out) + 2 Na(+)(out) = pyruvate(in) + 2 Na(+)(in). It carries out the reaction acetate(out) + 2 Na(+)(out) = acetate(in) + 2 Na(+)(in). The catalysed reaction is butanoate(out) + 2 Na(+)(out) = butanoate(in) + 2 Na(+)(in). The enzyme catalyses nicotinate(out) + 2 Na(+)(out) = nicotinate(in) + 2 Na(+)(in). It catalyses the reaction (R)-3-hydroxybutanoate(out) + 2 Na(+)(out) = (R)-3-hydroxybutanoate(in) + 2 Na(+)(in). It carries out the reaction acetoacetate(out) + 2 Na(+)(out) = acetoacetate(in) + 2 Na(+)(in). The catalysed reaction is 4-methyl-2-oxopentanoate(out) + 2 Na(+)(out) = 4-methyl-2-oxopentanoate(in) + 2 Na(+)(in). The enzyme catalyses 5-oxo-L-proline(out) + 2 Na(+)(out) = 5-oxo-L-proline(in) + 2 Na(+)(in). It catalyses the reaction iodide(out) = iodide(in). It carries out the reaction chloride(in) = chloride(out). The catalysed reaction is nitrate(in) = nitrate(out). The enzyme catalyses bromide(in) = bromide(out). Its function is as follows. Acts as an electrogenic sodium (Na(+)) and chloride (Cl-)-dependent sodium-coupled solute transporter, including transport of monocarboxylates (short-chain fatty acids including L-lactate, D-lactate, pyruvate, acetate, propionate, valerate and butyrate), mocarboxylate drugs (nicotinate, benzoate, salicylate and 5-aminosalicylate) and ketone bodies (beta-D-hydroxybutyrate, acetoacetate and alpha-ketoisocaproate), with a Na(+):substrate stoichiometry of between 4:1 and 2:1. Catalyzes passive carrier mediated diffusion of iodide. Mediates iodide transport from the thyrocyte into the colloid lumen through the apical membrane. Mediates sodium-coupled electrogenic transport of pyroglutamate (5-oxo-L-proline). Can mediate the transport of chloride, bromide, iodide and nitrate ions when external concentration of sodium ions is reduced. This chain is Sodium-coupled monocarboxylate transporter 1, found in Xenopus laevis (African clawed frog).